The following is a 509-amino-acid chain: Maturase K (509 aa).

Belongs to the intron maturase 2 family. MatK subfamily.

The protein localises to the plastid. It localises to the chloroplast. Usually encoded in the trnK tRNA gene intron. Probably assists in splicing its own and other chloroplast group II introns. The polypeptide is Maturase K (Clematis vitalba (Evergreen clematis)).